Reading from the N-terminus, the 336-residue chain is Fructose-1,6-bisphosphatase class 2 (336 aa).

Residues D33, E57, D85, and E88 each coordinate Mn(2+). Substrate is bound by residues 88–90 (EGT), Y119, 164–166 (KPR), 186–188 (DGD), and G210. E213 provides a ligand contact to Mn(2+).

It belongs to the FBPase class 2 family. As to quaternary structure, homodimer. Mn(2+) serves as cofactor.

It is found in the cytoplasm. The catalysed reaction is beta-D-fructose 1,6-bisphosphate + H2O = beta-D-fructose 6-phosphate + phosphate. Its pathway is carbohydrate biosynthesis; gluconeogenesis. Catalyzes the hydrolysis of fructose 1,6-bisphosphate to fructose 6-phosphate. The protein is Fructose-1,6-bisphosphatase class 2 (glpX) of Shigella flexneri.